Here is a 455-residue protein sequence, read N- to C-terminus: Serine incorporator 2 (455 aa).

11 helical membrane passes run 5-27 (LGAC…ILCS), 40-57 (LIFT…IIML), 96-118 (AVYR…MLCV), 131-150 (GFWF…AFYI), 160-182 (FYFG…IDFA), 202-224 (YAGL…ALMF), 239-256 (FISL…AAVL), 268-290 (LLQA…SSIP), 317-339 (QWWD…FISL), 385-407 (TYSY…MTLT), and 422-444 (WTAV…WTLV).

The protein belongs to the TDE1 family.

Its subcellular location is the cell membrane. It carries out the reaction a 1,2-diacyl-sn-glycero-3-phospho-L-serine(in) = a 1,2-diacyl-sn-glycero-3-phospho-L-serine(out). The catalysed reaction is a 1,2-diacyl-sn-glycero-3-phosphocholine(in) = a 1,2-diacyl-sn-glycero-3-phosphocholine(out). It catalyses the reaction a 1,2-diacyl-sn-glycero-3-phosphoethanolamine(in) = a 1,2-diacyl-sn-glycero-3-phosphoethanolamine(out). Its function is as follows. Non-ATP-dependent, non-specific lipid transporter for phosphatidylserine, phosphatidylcholine, and phosphatidylethanolamine. Functions as a scramblase that flips lipids in both directions across the membrane. In contrast to SERINC3 and SERINC5, has no effect on HIV-1 particles infectivity. In Homo sapiens (Human), this protein is Serine incorporator 2.